We begin with the raw amino-acid sequence, 198 residues long: C4b-binding protein beta chain (198 aa).

The N-terminal stretch at 1 to 17 (MFFWLMCYLVDVWLISA) is a signal peptide. A Sushi 1; atypical; lacks a Cys domain is found at 22 to 77 (HCPDPLLVTDEFSSLEPVNVNDTFMFKCNEHCIFKGSNWSQCRENHTRVTHSPVSK). Residues Asn-42, Asn-59, and Asn-66 are each glycosylated (N-linked (GlcNAc...) asparagine). The region spanning 79-135 (RDCGPPETPTHGYFEGRDFKSGSTITYYCEARYRLVGTQHQQCIDGEWTSAPPICEL) is the Sushi 2 domain. Disulfide bonds link Cys-81–Cys-121 and Cys-107–Cys-133.

As to quaternary structure, disulfide-linked complex of alpha and beta chains.

It localises to the secreted. Functionally, controls the classical pathway of complement activation. It binds as a cofactor to C3b/C4b inactivator (C3bINA), which then hydrolyzes the complement fragment C4b. It also accelerates the degradation of the C4bC2a complex (C3 convertase) by dissociating the complement fragment C2a. It also interacts with serum amyloid P component. This is C4b-binding protein beta chain (C4BPB) from Bos taurus (Bovine).